The chain runs to 569 residues: Proline--tRNA ligase (569 aa).

This sequence belongs to the class-II aminoacyl-tRNA synthetase family. ProS type 1 subfamily. Homodimer.

The protein resides in the cytoplasm. It carries out the reaction tRNA(Pro) + L-proline + ATP = L-prolyl-tRNA(Pro) + AMP + diphosphate. In terms of biological role, catalyzes the attachment of proline to tRNA(Pro) in a two-step reaction: proline is first activated by ATP to form Pro-AMP and then transferred to the acceptor end of tRNA(Pro). As ProRS can inadvertently accommodate and process non-cognate amino acids such as alanine and cysteine, to avoid such errors it has two additional distinct editing activities against alanine. One activity is designated as 'pretransfer' editing and involves the tRNA(Pro)-independent hydrolysis of activated Ala-AMP. The other activity is designated 'posttransfer' editing and involves deacylation of mischarged Ala-tRNA(Pro). The misacylated Cys-tRNA(Pro) is not edited by ProRS. The chain is Proline--tRNA ligase from Dehalococcoides mccartyi (strain CBDB1).